The following is a 311-amino-acid chain: Methionyl-tRNA formyltransferase (311 aa).

Residue 110–113 (SLLP) coordinates (6S)-5,6,7,8-tetrahydrofolate.

Belongs to the Fmt family.

The catalysed reaction is L-methionyl-tRNA(fMet) + (6R)-10-formyltetrahydrofolate = N-formyl-L-methionyl-tRNA(fMet) + (6S)-5,6,7,8-tetrahydrofolate + H(+). In terms of biological role, attaches a formyl group to the free amino group of methionyl-tRNA(fMet). The formyl group appears to play a dual role in the initiator identity of N-formylmethionyl-tRNA by promoting its recognition by IF2 and preventing the misappropriation of this tRNA by the elongation apparatus. This is Methionyl-tRNA formyltransferase from Streptococcus sanguinis (strain SK36).